A 63-amino-acid polypeptide reads, in one-letter code: Conotoxin PnMRCL-0111 (63 aa).

The first 22 residues, 1–22 (MHCLSVFVILLLLTASAPSVDA), serve as a signal peptide directing secretion. A propeptide spanning residues 23 to 50 (QPKTEDDVPLSSFHDDLQRTVRTLLDIR) is cleaved from the precursor. At Trp-62 the chain carries Tryptophan amide.

This sequence belongs to the conotoxin T superfamily. In terms of processing, contains 2 disulfide bonds that can be either 'C1-C3, C2-C4' or 'C1-C4, C2-C3', since these disulfide connectivities have been observed for conotoxins with cysteine framework V (for examples, see AC P0DQQ7 and AC P81755). As to expression, expressed by the venom duct.

It localises to the secreted. This Conus pennaceus (Feathered cone) protein is Conotoxin PnMRCL-0111.